We begin with the raw amino-acid sequence, 321 residues long: Inner membrane protein YtfF (321 aa).

Topologically, residues 1 to 4 (MISG) are cytoplasmic. A helical transmembrane segment spans residues 5 to 25 (VLYALLAGLMWGLIFVGPLIV). In terms of domain architecture, EamA spans 13 to 141 (LMWGLIFVGP…IGIGLACVNI (129 aa)). Topologically, residues 26–30 (PEYPA) are periplasmic. The helical transmembrane segment at 31–51 (MLQSMGRYLALGLIALPIAWL) threads the bilayer. Topologically, residues 52-65 (GRVRLRQLARRDWL) are cytoplasmic. A helical membrane pass occupies residues 66-86 (TALMLTMMGNLIYYFCLASAI). Residues 87–92 (QRTGAP) lie on the Periplasmic side of the membrane. Residues 93–113 (VSTMIIGTLPVVIPVFANLLY) form a helical membrane-spanning segment. Residues 114 to 120 (SQRDGKL) lie on the Cytoplasmic side of the membrane. A helical transmembrane segment spans residues 121–141 (AWGKLAPALICIGIGLACVNI). At 142-154 (AELNHGLPDFDWA) the chain is on the periplasmic side. A helical membrane pass occupies residues 155–175 (RYTSGIVLALVSVVCWAWYAL). Residues 176 to 194 (RNARWLRENPDKHPMMWAT) lie on the Cytoplasmic side of the membrane. A helical membrane pass occupies residues 195–215 (AQALVTLPVSLIGYLVACYWL). The Periplasmic portion of the chain corresponds to 216-230 (NTQTPDFSLPFGPRP). A helical transmembrane segment spans residues 231 to 251 (LVFISLMVAIAVLCSWVGALC). Topologically, residues 252–261 (WNVASQLLPT) are cytoplasmic. A helical membrane pass occupies residues 262-282 (VILGPLIVFETLAGLLYTFLL). Over 283 to 285 (RQQ) the chain is Periplasmic. The helical transmembrane segment at 286–306 (MPPLMTLSGIALLVIGVVIAV) threads the bilayer. Over 307–321 (RAKPEKPLTESVSES) the chain is Cytoplasmic.

The protein resides in the cell inner membrane. The protein is Inner membrane protein YtfF (ytfF) of Escherichia coli (strain K12).